Here is a 520-residue protein sequence, read N- to C-terminus: GMP synthase [glutamine-hydrolyzing] (520 aa).

Residues 12 to 205 (KIIVLDYGSQ…AVNICGARGD (194 aa)) enclose the Glutamine amidotransferase type-1 domain. The active-site Nucleophile is the C89. Catalysis depends on residues H179 and E181. The GMPS ATP-PPase domain maps to 206–395 (WSMDNFIDME…LGMPDEVVWR (190 aa)). Residue 233–239 (SGGVDSS) participates in ATP binding.

As to quaternary structure, homodimer.

The catalysed reaction is XMP + L-glutamine + ATP + H2O = GMP + L-glutamate + AMP + diphosphate + 2 H(+). It participates in purine metabolism; GMP biosynthesis; GMP from XMP (L-Gln route): step 1/1. In terms of biological role, catalyzes the synthesis of GMP from XMP. The protein is GMP synthase [glutamine-hydrolyzing] of Streptococcus agalactiae serotype III (strain NEM316).